A 221-amino-acid polypeptide reads, in one-letter code: Oxaloacetate tautomerase FAHD1, mitochondrial (221 aa).

The N-terminal 24 residues, 1 to 24, are a transit peptide targeting the mitochondrion; sequence MAASRPLSRFWEWGKNIVCVGRNY. The residue at position 37 (serine 37) is a Phosphoserine. Positions 68, 70, and 99 each coordinate Mg(2+). Lysine 110 is subject to N6-acetyllysine. Residue lysine 112 is modified to N6-succinyllysine.

The protein belongs to the FAH family. Homodimer. It depends on Mg(2+) as a cofactor. The cofactor is Mn(2+).

It localises to the mitochondrion. The protein localises to the cytoplasm. The protein resides in the cytosol. It carries out the reaction oxaloacetate = enol-oxaloacetate. It catalyses the reaction oxaloacetate + H(+) = pyruvate + CO2. The enzyme catalyses a 3-acylpyruvate + H2O = a carboxylate + pyruvate + H(+). The catalysed reaction is acetylpyruvate + H2O = acetate + pyruvate + H(+). It carries out the reaction 3-fumarylpyruvate + H2O = fumarate + pyruvate + H(+). Its activity is regulated as follows. Oxaloacetate decarboxylation is competitively inhibited by oxalate. Its function is as follows. Tautomerase that converts enol-oxaloacetate, a strong inhibitor of succinate dehydrogenase, to the physiological keto form of oxaloacetate. It is thereby required to maximize aerobic respiration efficiency by preventing succinate dehydrogenase inhibition. Also acts as a weak oxaloacetate decarboxylase (ODx), catalyzing the decarboxylation of oxaloacetate (OAA) to pyruvate and CO(2), and as such is likely a regulatory enzyme in the TCA cycle. Also displays acylpyruvase activity, being able to hydrolyze acetylpyruvate and fumarylpyruvate in vitro. This chain is Oxaloacetate tautomerase FAHD1, mitochondrial (FAHD1), found in Pongo abelii (Sumatran orangutan).